We begin with the raw amino-acid sequence, 118 residues long: Immunoglobulin heavy variable 4-30-2 (118 aa).

An N-terminal signal peptide occupies residues 1 to 19; the sequence is MKHLWFFLLLVAAPRWVLS. A framework-1 region spans residues 20–44; the sequence is QLQLQESGSGLVKPSQTLSLTCAVS. The 99-residue stretch at 20–118 folds into the Ig-like domain; that stretch reads QLQLQESGSG…ADTAVYYCAR (99 aa). Cys41 and Cys116 form a disulfide bridge. The complementarity-determining-1 stretch occupies residues 45-54; that stretch reads GGSISSGGYS. The segment at 55-71 is framework-2; it reads WSWIRQPPGKGLEWIGY. The segment at 72–78 is complementarity-determining-2; the sequence is IYHSGST. The framework-3 stretch occupies residues 79-116; the sequence is YYNPSLKSRVTISVDRSKNQFSLKLSSVTAADTAVYYC. The interval 117-118 is complementarity-determining-3; it reads AR.

In terms of assembly, immunoglobulins are composed of two identical heavy chains and two identical light chains; disulfide-linked.

The protein resides in the secreted. Its subcellular location is the cell membrane. Its function is as follows. V region of the variable domain of immunoglobulin heavy chains that participates in the antigen recognition. Immunoglobulins, also known as antibodies, are membrane-bound or secreted glycoproteins produced by B lymphocytes. In the recognition phase of humoral immunity, the membrane-bound immunoglobulins serve as receptors which, upon binding of a specific antigen, trigger the clonal expansion and differentiation of B lymphocytes into immunoglobulins-secreting plasma cells. Secreted immunoglobulins mediate the effector phase of humoral immunity, which results in the elimination of bound antigens. The antigen binding site is formed by the variable domain of one heavy chain, together with that of its associated light chain. Thus, each immunoglobulin has two antigen binding sites with remarkable affinity for a particular antigen. The variable domains are assembled by a process called V-(D)-J rearrangement and can then be subjected to somatic hypermutations which, after exposure to antigen and selection, allow affinity maturation for a particular antigen. The sequence is that of Immunoglobulin heavy variable 4-30-2 from Homo sapiens (Human).